A 320-amino-acid chain; its full sequence is Ferrochelatase (320 aa).

2 residues coordinate Fe cation: H194 and E275.

It belongs to the ferrochelatase family.

The protein localises to the cytoplasm. The catalysed reaction is heme b + 2 H(+) = protoporphyrin IX + Fe(2+). It functions in the pathway porphyrin-containing compound metabolism; protoheme biosynthesis; protoheme from protoporphyrin-IX: step 1/1. Its function is as follows. Catalyzes the ferrous insertion into protoporphyrin IX. In Xylella fastidiosa (strain 9a5c), this protein is Ferrochelatase.